The chain runs to 174 residues: Large ribosomal subunit protein uL18 (174 aa).

It belongs to the universal ribosomal protein uL18 family. In terms of assembly, part of the 50S ribosomal subunit. Contacts the 5S and 23S rRNAs.

In terms of biological role, this is one of the proteins that bind and probably mediate the attachment of the 5S RNA into the large ribosomal subunit, where it forms part of the central protuberance. The sequence is that of Large ribosomal subunit protein uL18 from Methanosarcina mazei (strain ATCC BAA-159 / DSM 3647 / Goe1 / Go1 / JCM 11833 / OCM 88) (Methanosarcina frisia).